A 386-amino-acid polypeptide reads, in one-letter code: Enoyl-[acyl-carrier-protein] reductase 2, mitochondrial (386 aa).

A mitochondrion-targeting transit peptide spans 1-22 (MYSVLKQSIRPRLLATHNQFRT). Tyr-79 functions as the Proton donor in the catalytic mechanism. NADP(+) is bound by residues Asn-172, 199 to 202 (TSAV), 222 to 224 (RDR), 296 to 299 (YGGM), 321 to 323 (FWV), and Lys-381.

It belongs to the zinc-containing alcohol dehydrogenase family. Quinone oxidoreductase subfamily. Homodimer and heterodimer with ETR1.

Its subcellular location is the mitochondrion. It catalyses the reaction a 2,3-saturated acyl-[ACP] + NADP(+) = a (2E)-enoyl-[ACP] + NADPH + H(+). Functionally, required for respiration and the maintenance of the mitochondrial compartment. Oxidoreductase with a preference for short and medium chain substrates, including trans-2-hexenoyl-CoA (C6), trans-2-decenoyl-CoA (C10), and trans-2-hexadecenoyl-CoA (C16). May play a role in mitochondrial fatty acid synthesis. This is Enoyl-[acyl-carrier-protein] reductase 2, mitochondrial (ETR2) from Candida tropicalis (Yeast).